The sequence spans 270 residues: A-type potassium channel modulatory protein KCNIP2 (270 aa).

Positions 1 to 17 are enriched in basic and acidic residues; it reads MRGQGRKESLSDSRDLD. The interval 1–33 is disordered; that stretch reads MRGQGRKESLSDSRDLDGSYDQLTGHPPGPTKK. At serine 9 the chain carries Phosphoserine. Residues cysteine 45 and cysteine 46 are each lipidated (S-palmitoyl cysteine). Positions 81 to 137 constitute an EF-hand 1; degenerate domain; it reads FELSTVCHRPEGLEQLQEQTKFTRKELQVLYRGFKNECPSGIVNEENFKQIYSQFFP. EF-hand domains follow at residues 140–175, 176–211, and 224–259; these read DSST…ILRG, TIDD…IYDM, and APRE…DENI. Residues aspartate 153, asparagine 155, aspartate 157, serine 159, aspartate 164, aspartate 189, asparagine 191, aspartate 193, cysteine 195, glutamate 200, aspartate 237, asparagine 239, aspartate 241, and glutamate 248 each coordinate Ca(2+). The interval 257-270 is interaction with KCND2; sequence ENIMRSMQLFDNVI.

The protein belongs to the recoverin family. In terms of assembly, component of heteromultimeric potassium channels. Identified in potassium channel complexes containing KCND1, KCND2, KCND3, KCNIP1, KCNIP2, KCNIP3, KCNIP4, DPP6 and DPP10. The KCND2-KCNIP2 channel complex contains four KCND2 and four KCNIP2 subunits. Interacts with KCND2. Probably part of a complex consisting of KCNIP1, KCNIP2 isoform 3 and KCND2. At least isoform 2 and isoform 3 can self-associate to form homodimers and homotetramers. Isoform 3 interacts with KCNIP1 in a calcium-dependent manner. Interacts with KCND3; each KCNIP2 monomer interacts with two adjacent KCND3 subunits, through both the N-terminal inactivation ball of a KCND3 subunit and a C-terminal helix from the adjacent KCND3 subunit, clamping them together; this interaction modulates the channel gating kinetics. Post-translationally, palmitoylated. Palmitoylation enhances association with the plasma membrane. As to expression, expressed in heart ventricle with isoform 1 as most prominent form.

The protein resides in the cell membrane. Functionally, regulatory subunit of Kv4/D (Shal)-type voltage-gated rapidly inactivating A-type potassium channels. Modulates channel density, inactivation kinetics and rate of recovery from inactivation in a calcium-dependent and isoform-specific manner. Involved in KCND2 and KCND3 trafficking to the cell surface. May be required for the expression of I(To) currents in the heart. This chain is A-type potassium channel modulatory protein KCNIP2, found in Mustela putorius furo (European domestic ferret).